Here is a 385-residue protein sequence, read N- to C-terminus: Leucine aminopeptidase 1 (385 aa).

A signal peptide spans 1–19; that stretch reads MKFPNLLSLGVAASTTVLA. The propeptide occupies 20 to 87; it reads AVPNQKPIGD…FPRTFAQTTV (68 aa). N-linked (GlcNAc...) asparagine glycosylation is present at Asn177. Zn(2+)-binding residues include His185, Asp204, Glu243, and Asp270. Cys319 and Cys323 are oxidised to a cystine. A Zn(2+)-binding site is contributed by His352.

The protein belongs to the peptidase M28 family. M28E subfamily. As to quaternary structure, monomer. Zn(2+) is required as a cofactor.

It localises to the secreted. Its function is as follows. Extracellular aminopeptidase that allows assimilation of proteinaceous substrates. This chain is Leucine aminopeptidase 1 (LAP1), found in Ajellomyces capsulatus (strain H88) (Darling's disease fungus).